The chain runs to 284 residues: Bifunctional protein FolD (284 aa).

Residues 166 to 168 (GRS) and S191 contribute to the NADP(+) site.

The protein belongs to the tetrahydrofolate dehydrogenase/cyclohydrolase family. In terms of assembly, homodimer.

The enzyme catalyses (6R)-5,10-methylene-5,6,7,8-tetrahydrofolate + NADP(+) = (6R)-5,10-methenyltetrahydrofolate + NADPH. It catalyses the reaction (6R)-5,10-methenyltetrahydrofolate + H2O = (6R)-10-formyltetrahydrofolate + H(+). It participates in one-carbon metabolism; tetrahydrofolate interconversion. Functionally, catalyzes the oxidation of 5,10-methylenetetrahydrofolate to 5,10-methenyltetrahydrofolate and then the hydrolysis of 5,10-methenyltetrahydrofolate to 10-formyltetrahydrofolate. This is Bifunctional protein FolD from Delftia acidovorans (strain DSM 14801 / SPH-1).